The sequence spans 876 residues: Alanine--tRNA ligase (876 aa).

Residues H566, H570, C668, and H672 each contribute to the Zn(2+) site.

It belongs to the class-II aminoacyl-tRNA synthetase family. Requires Zn(2+) as cofactor.

Its subcellular location is the cytoplasm. It carries out the reaction tRNA(Ala) + L-alanine + ATP = L-alanyl-tRNA(Ala) + AMP + diphosphate. Functionally, catalyzes the attachment of alanine to tRNA(Ala) in a two-step reaction: alanine is first activated by ATP to form Ala-AMP and then transferred to the acceptor end of tRNA(Ala). Also edits incorrectly charged Ser-tRNA(Ala) and Gly-tRNA(Ala) via its editing domain. The chain is Alanine--tRNA ligase from Petrotoga mobilis (strain DSM 10674 / SJ95).